Reading from the N-terminus, the 537-residue chain is 2-succinyl-5-enolpyruvyl-6-hydroxy-3-cyclohexene-1-carboxylate synthase (537 aa).

Belongs to the TPP enzyme family. MenD subfamily. In terms of assembly, homodimer. Mg(2+) is required as a cofactor. Mn(2+) serves as cofactor. It depends on thiamine diphosphate as a cofactor.

The enzyme catalyses isochorismate + 2-oxoglutarate + H(+) = 5-enolpyruvoyl-6-hydroxy-2-succinyl-cyclohex-3-ene-1-carboxylate + CO2. It functions in the pathway quinol/quinone metabolism; 1,4-dihydroxy-2-naphthoate biosynthesis; 1,4-dihydroxy-2-naphthoate from chorismate: step 2/7. Its pathway is quinol/quinone metabolism; menaquinone biosynthesis. Functionally, catalyzes the thiamine diphosphate-dependent decarboxylation of 2-oxoglutarate and the subsequent addition of the resulting succinic semialdehyde-thiamine pyrophosphate anion to isochorismate to yield 2-succinyl-5-enolpyruvyl-6-hydroxy-3-cyclohexene-1-carboxylate (SEPHCHC). In Rhodococcus erythropolis (strain PR4 / NBRC 100887), this protein is 2-succinyl-5-enolpyruvyl-6-hydroxy-3-cyclohexene-1-carboxylate synthase.